Here is a 213-residue protein sequence, read N- to C-terminus: Inactive ribonuclease-like protein 10 (213 aa).

The N-terminal stretch at 1–24 is a signal peptide; that stretch reads MKLTLVQFFFMMLLLLLGLGVGLG. N-linked (GlcNAc...) asparagine glycosylation occurs at N128.

It belongs to the pancreatic ribonuclease family. In terms of processing, the N-terminus is blocked. Glycosylated. In terms of tissue distribution, male-specific expression in proximal caput of the epididymis.

The protein resides in the secreted. Secreted proximal epididymal protein required for post-testicular sperm maturation and male fertility. May be involved in sperm adhesion to the egg zona pellucida. Does not have ribonuclease activity. This Sus scrofa (Pig) protein is Inactive ribonuclease-like protein 10 (RNASE10).